Here is a 34-residue protein sequence, read N- to C-terminus: MEVNILAFIATALFILIPTAFLLIIYVKTASQND.

Residues 5–25 (ILAFIATALFILIPTAFLLII) form a helical membrane-spanning segment.

It belongs to the PsbM family. In terms of assembly, PSII is composed of 1 copy each of membrane proteins PsbA, PsbB, PsbC, PsbD, PsbE, PsbF, PsbH, PsbI, PsbJ, PsbK, PsbL, PsbM, PsbT, PsbX, PsbY, PsbZ, Psb30/Ycf12, at least 3 peripheral proteins of the oxygen-evolving complex and a large number of cofactors. It forms dimeric complexes.

The protein resides in the plastid. The protein localises to the chloroplast thylakoid membrane. Functionally, one of the components of the core complex of photosystem II (PSII). PSII is a light-driven water:plastoquinone oxidoreductase that uses light energy to abstract electrons from H(2)O, generating O(2) and a proton gradient subsequently used for ATP formation. It consists of a core antenna complex that captures photons, and an electron transfer chain that converts photonic excitation into a charge separation. This subunit is found at the monomer-monomer interface. The polypeptide is Photosystem II reaction center protein M (Agrostis stolonifera (Creeping bentgrass)).